Consider the following 246-residue polypeptide: Isoprenyl transferase 1 (246 aa).

Residue D19 is part of the active site. A Mg(2+)-binding site is contributed by D19. Substrate contacts are provided by residues 20–23, W24, R32, H36, and 64–66; these read GNGR and STD. N67 serves as the catalytic Proton acceptor. Substrate contacts are provided by residues W68, R70, R180, and 186-188; that span reads RLS. E199 contributes to the Mg(2+) binding site.

The protein belongs to the UPP synthase family. Homodimer. Requires Mg(2+) as cofactor.

Its function is as follows. Catalyzes the condensation of isopentenyl diphosphate (IPP) with allylic pyrophosphates generating different type of terpenoids. This is Isoprenyl transferase 1 from Bradyrhizobium diazoefficiens (strain JCM 10833 / BCRC 13528 / IAM 13628 / NBRC 14792 / USDA 110).